A 371-amino-acid chain; its full sequence is UDP-N-acetylglucosamine--N-acetylmuramyl-(pentapeptide) pyrophosphoryl-undecaprenol N-acetylglucosamine transferase (371 aa).

Residues 15–17 (TGG), Asn126, Arg172, Ser199, Ile256, 275–280 (ALTVSE), and Gln301 each bind UDP-N-acetyl-alpha-D-glucosamine.

Belongs to the glycosyltransferase 28 family. MurG subfamily.

The protein localises to the cell inner membrane. It carries out the reaction di-trans,octa-cis-undecaprenyl diphospho-N-acetyl-alpha-D-muramoyl-L-alanyl-D-glutamyl-meso-2,6-diaminopimeloyl-D-alanyl-D-alanine + UDP-N-acetyl-alpha-D-glucosamine = di-trans,octa-cis-undecaprenyl diphospho-[N-acetyl-alpha-D-glucosaminyl-(1-&gt;4)]-N-acetyl-alpha-D-muramoyl-L-alanyl-D-glutamyl-meso-2,6-diaminopimeloyl-D-alanyl-D-alanine + UDP + H(+). It functions in the pathway cell wall biogenesis; peptidoglycan biosynthesis. Its function is as follows. Cell wall formation. Catalyzes the transfer of a GlcNAc subunit on undecaprenyl-pyrophosphoryl-MurNAc-pentapeptide (lipid intermediate I) to form undecaprenyl-pyrophosphoryl-MurNAc-(pentapeptide)GlcNAc (lipid intermediate II). The sequence is that of UDP-N-acetylglucosamine--N-acetylmuramyl-(pentapeptide) pyrophosphoryl-undecaprenol N-acetylglucosamine transferase from Francisella tularensis subsp. mediasiatica (strain FSC147).